The chain runs to 169 residues: Ribosome maturation factor RimM (169 aa).

The 76-residue stretch at 92-167 folds into the PRC barrel domain; it reads PKDTYFICDI…YMKIKVVEGL (76 aa).

It belongs to the RimM family. Binds ribosomal protein uS19.

The protein resides in the cytoplasm. Functionally, an accessory protein needed during the final step in the assembly of 30S ribosomal subunit, possibly for assembly of the head region. Essential for efficient processing of 16S rRNA. May be needed both before and after RbfA during the maturation of 16S rRNA. It has affinity for free ribosomal 30S subunits but not for 70S ribosomes. The chain is Ribosome maturation factor RimM from Caldicellulosiruptor bescii (strain ATCC BAA-1888 / DSM 6725 / KCTC 15123 / Z-1320) (Anaerocellum thermophilum).